A 469-amino-acid polypeptide reads, in one-letter code: MTRPVRTRFAPSPTGFIHLGNIRSALYPWAFARKMKGTFVLRIEDTDLERSTEASVDAILEGMAWLGLDYDEGPYYQMQRMDRYREVLAQMLEKDLVYPCYMSTEELDALRERQRAAGEKPRYDGTWRPEPGKVLPEPPAGVTPVLRFRNPLTGSVVWDDAVKGRVEISNEELDDLVIARPDGTPTYNFCVVVDDLDMGITHVIRGDDHVNNTPRQINILRALGGEVPVYAHLPTVLNEQGEKMSKRHGAMSVMGYRDAGYLPEAVLNYLARLGWSHGDAEIFSREQFVEWFDLEHLGKSPAQYDHNKLNWLNNHYIKEADDARLAELAKPFFAALGIDADTIARGPDLVGVMGLMKDRASTVKEIAENSTMFYRAPAPDAQALAQHVTDAVRPALAEFAAALKTAEWTKEAIAAALKAVLGAHKLKMPQLAMPVRLLVAGTTHTPSIDAVLLLFGRDVVVSRLAAALA.

The 'HIGH' region motif lies at 11–21 (PSPTGFIHLGN). The span at 118–131 (GEKPRYDGTWRPEP) shows a compositional bias: basic and acidic residues. The disordered stretch occupies residues 118-139 (GEKPRYDGTWRPEPGKVLPEPP). The 'KMSKS' region signature appears at 243 to 247 (KMSKR). An ATP-binding site is contributed by Lys-246.

The protein belongs to the class-I aminoacyl-tRNA synthetase family. Glutamate--tRNA ligase type 1 subfamily. As to quaternary structure, monomer.

Its subcellular location is the cytoplasm. It catalyses the reaction tRNA(Glu) + L-glutamate + ATP = L-glutamyl-tRNA(Glu) + AMP + diphosphate. Catalyzes the attachment of glutamate to tRNA(Glu) in a two-step reaction: glutamate is first activated by ATP to form Glu-AMP and then transferred to the acceptor end of tRNA(Glu). This is Glutamate--tRNA ligase from Burkholderia pseudomallei (strain 1106a).